A 250-amino-acid chain; its full sequence is Probable transcriptional regulatory protein Ctha_1786 (250 aa).

This sequence belongs to the TACO1 family.

It is found in the cytoplasm. The polypeptide is Probable transcriptional regulatory protein Ctha_1786 (Chloroherpeton thalassium (strain ATCC 35110 / GB-78)).